The following is a 205-amino-acid chain: Proteasome subunit beta type-3 (205 aa).

S2 is modified (N-acetylserine). Residue K77 is modified to N6-acetyllysine.

It belongs to the peptidase T1B family. As to quaternary structure, the 26S proteasome consists of a 20S proteasome core and two 19S regulatory subunits. The 20S proteasome core is a barrel-shaped complex made of 28 subunits that are arranged in four stacked rings. The two outer rings are each formed by seven alpha subunits, and the two inner rings are formed by seven beta subunits. The proteolytic activity is exerted by three beta-subunits PSMB5, PSMB6 and PSMB7.

It localises to the cytoplasm. It is found in the nucleus. Functionally, non-catalytic component of the 20S core proteasome complex involved in the proteolytic degradation of most intracellular proteins. This complex plays numerous essential roles within the cell by associating with different regulatory particles. Associated with two 19S regulatory particles, forms the 26S proteasome and thus participates in the ATP-dependent degradation of ubiquitinated proteins. The 26S proteasome plays a key role in the maintenance of protein homeostasis by removing misfolded or damaged proteins that could impair cellular functions, and by removing proteins whose functions are no longer required. Associated with the PA200 or PA28, the 20S proteasome mediates ubiquitin-independent protein degradation. This type of proteolysis is required in several pathways including spermatogenesis (20S-PA200 complex) or generation of a subset of MHC class I-presented antigenic peptides (20S-PA28 complex). The sequence is that of Proteasome subunit beta type-3 (PSMB3) from Bos taurus (Bovine).